A 153-amino-acid polypeptide reads, in one-letter code: Methylglyoxal synthase (153 aa).

Residues 6–153 (RTIAARKHIA…QRYLAERLPS (148 aa)) enclose the MGS-like domain. Substrate-binding positions include H19, K23, 45-48 (TGTT), and 65-66 (SG). Catalysis depends on D71, which acts as the Proton donor/acceptor. Residue H98 coordinates substrate.

Belongs to the methylglyoxal synthase family.

It carries out the reaction dihydroxyacetone phosphate = methylglyoxal + phosphate. Functionally, catalyzes the formation of methylglyoxal from dihydroxyacetone phosphate. This is Methylglyoxal synthase from Sodalis glossinidius (strain morsitans).